A 2089-amino-acid polypeptide reads, in one-letter code: Non-reducing polyketide synthase PKS16 (2089 aa).

The tract at residues 8–243 is N-terminal acylcarrier protein transacylase (SAT) domain (SAT); sequence VLFGDQTVDP…IKLPITAAFH (236 aa). The interval 342–364 is disordered; that stretch reads AGIEVSRSTEMQPRQEQRTKPRS. A compositionally biased stretch (basic and acidic residues) spans 354–364; the sequence is PRQEQRTKPRS. The Ketosynthase family 3 (KS3) domain occupies 364-793; the sequence is SSDIAIIGYA…GGNTSLLIED (430 aa). Catalysis depends on for beta-ketoacyl synthase activity residues C536, H671, and H710. The interval 891–1214 is malonyl-CoA:ACP transacylase (MAT) domain; the sequence is VFLFTGQGSQ…SIANAYNSGV (324 aa). Residues 1273 to 1586 are product template (PT) domain; it reads TTCLQVIENE…KRTTLQSLLG (314 aa). An N-terminal hotdog fold region spans residues 1276–1408; it reads LQVIENETFT…CTVMYGDGHQ (133 aa). Residues 1276–1582 enclose the PKS/mFAS DH domain; it reads LQVIENETFT…FQQMKRTTLQ (307 aa). Catalysis depends on H1309, which acts as the Proton acceptor; for dehydratase activity. The tract at residues 1435–1582 is C-terminal hotdog fold; sequence IHRMLKEMIY…FQQMKRTTLQ (148 aa). Residue D1495 is the Proton donor; for dehydratase activity of the active site. Positions 1617 to 1694 constitute a Carrier 1 domain; it reads QSPVAGFSKV…ELRAFFLDKM (78 aa). S1654 bears the O-(pantetheine 4'-phosphoryl)serine mark. The tract at residues 1697-1730 is disordered; the sequence is PQATANDDDSDDSSDDEGPGFSRSQSNSTISTPE. Residues 1702–1714 are compositionally biased toward acidic residues; it reads NDDDSDDSSDDEG. The span at 1718 to 1728 shows a compositional bias: polar residues; the sequence is SRSQSNSTIST. The 78-residue stretch at 1729–1806 folds into the Carrier 2 domain; that stretch reads PEEPDVVNVL…DVQKALGAAP (78 aa). S1766 bears the O-(pantetheine 4'-phosphoryl)serine mark. The tract at residues 1848-2083 is thioesterase (TE) domain; the sequence is LFLLPDGAGS…VVGGNHFSIM (236 aa).

It functions in the pathway secondary metabolite biosynthesis. In terms of biological role, non-reducing polyketide synthase; part of the gene cluster that mediates the biosynthesis of orcinol depsidone grayanic acid (GRA), the only major secondary metabolite known in C.grayi. The first step consists in the ring and depside synthesis by PKS16 leading to 4-O-demethylsphaerophorin, involving different orcinol-like rings, one with acetyl CoA and the other with octanoyl CoA as the starter. Further depsidone formation by the GRA cluster-specific cytochrome P450 leads to 4-O-demethylgrayanic acid. Finally, the cluster specific O-methyltransferase probably converts the 4-O-demethylgrayanic acid into grayanic acid. This is Non-reducing polyketide synthase PKS16 from Cladonia grayi (Gray's cup lichen).